Reading from the N-terminus, the 444-residue chain is Chitinase-like protein Idgf4 (444 aa).

A signal peptide spans 1–22; it reads MKLLLILLGALLAVLTIKRTSA. The GH18 domain occupies 27–444; it reads NHLICYYDGT…ILRAIKFKFQ (418 aa). A disulfide bond links Cys31 and Cys58. The N-linked (GlcNAc...) asparagine glycan is linked to Asn226. Cys345 and Cys428 are disulfide-bonded.

This sequence belongs to the glycosyl hydrolase 18 family. IDGF subfamily. Glycosylated.

The protein resides in the secreted. Cooperates with insulin-like peptides to stimulate the proliferation, polarization and motility of imaginal disk cells. May act by stabilizing the binding of insulin-like peptides to its receptor through a simultaneous interaction with both molecules to form a multiprotein signaling complex. This is Chitinase-like protein Idgf4 (Idgf4) from Glossina morsitans morsitans (Savannah tsetse fly).